The primary structure comprises 611 residues: Rho GTPase-activating protein gacN (611 aa).

The Rho-GAP domain occupies Lys-24–Tyr-219. The stretch at Ile-236–Ser-499 forms a coiled coil. The segment covering Asn-476 to Lys-491 has biased composition (basic and acidic residues). Positions Asn-476–Asp-550 are disordered. 2 stretches are compositionally biased toward low complexity: residues Ser-495–Ser-509 and Thr-527–Pro-540.

The protein resides in the cytoplasm. Its function is as follows. Rho GTPase-activating protein involved in the signal transduction pathway. The protein is Rho GTPase-activating protein gacN (gacN) of Dictyostelium discoideum (Social amoeba).